Here is a 798-residue protein sequence, read N- to C-terminus: Phenylalanine--tRNA ligase beta subunit (798 aa).

The 109-residue stretch at 39-147 (AARLAGFTLA…PSGEVGERFI (109 aa)) folds into the tRNA-binding domain. Residues 404-475 (DHSRAYKLDA…RIASLTKLVG (72 aa)) enclose the B5 domain. Positions 453, 459, 462, and 463 each coordinate Mg(2+). One can recognise an FDX-ACB domain in the interval 704-797 (RDLQAVERDF…VAKATGGTLR (94 aa)).

This sequence belongs to the phenylalanyl-tRNA synthetase beta subunit family. Type 1 subfamily. As to quaternary structure, tetramer of two alpha and two beta subunits. Mg(2+) is required as a cofactor.

It localises to the cytoplasm. It carries out the reaction tRNA(Phe) + L-phenylalanine + ATP = L-phenylalanyl-tRNA(Phe) + AMP + diphosphate + H(+). In Ruegeria pomeroyi (strain ATCC 700808 / DSM 15171 / DSS-3) (Silicibacter pomeroyi), this protein is Phenylalanine--tRNA ligase beta subunit.